The sequence spans 271 residues: Tryptophan synthase alpha chain (271 aa).

Active-site proton acceptor residues include Glu-49 and Asp-60.

It belongs to the TrpA family. As to quaternary structure, tetramer of two alpha and two beta chains.

The enzyme catalyses (1S,2R)-1-C-(indol-3-yl)glycerol 3-phosphate + L-serine = D-glyceraldehyde 3-phosphate + L-tryptophan + H2O. It functions in the pathway amino-acid biosynthesis; L-tryptophan biosynthesis; L-tryptophan from chorismate: step 5/5. Functionally, the alpha subunit is responsible for the aldol cleavage of indoleglycerol phosphate to indole and glyceraldehyde 3-phosphate. This Buchnera aphidicola subsp. Schizaphis graminum (strain Sg) protein is Tryptophan synthase alpha chain.